Consider the following 286-residue polypeptide: Beta-lactamase SHV-1 (286 aa).

The signal sequence occupies residues 1-21 (MRYIRLCIISLLATLPLAVHA). The active-site Acyl-ester intermediate is serine 66. A disulfide bridge links cysteine 73 with cysteine 119. Glutamate 164 acts as the Proton acceptor in catalysis. 230–232 (KTG) provides a ligand contact to substrate.

This sequence belongs to the class-A beta-lactamase family.

The catalysed reaction is a beta-lactam + H2O = a substituted beta-amino acid. The polypeptide is Beta-lactamase SHV-1 (bla) (Escherichia coli).